Here is a 284-residue protein sequence, read N- to C-terminus: Tropomyosin-1 (284 aa).

2 disordered regions span residues 1 to 26 (MDAIKKKMQAMKLEKDNAMDKADTCE) and 96 to 124 (EEDLEKSEERSGTAQQKLLEAQQSADENN). Positions 1–276 (MDAIKKKMQA…YKSLADEMDS (276 aa)) form a coiled coil. Basic and acidic residues predominate over residues 12-26 (KLEKDNAMDKADTCE). Over residues 107–121 (GTAQQKLLEAQQSAD) the composition is skewed to polar residues.

This sequence belongs to the tropomyosin family. In terms of assembly, homodimer.

In terms of biological role, tropomyosin, in association with the troponin complex, plays a central role in the calcium dependent regulation of muscle contraction. This chain is Tropomyosin-1, found in Bombyx mori (Silk moth).